The chain runs to 260 residues: Oxidoreductase macE (260 aa).

It belongs to the oxidoreductase OpS7 family.

It participates in secondary metabolite biosynthesis; terpenoid biosynthesis. Its function is as follows. Oxidoreductase; part of the gene cluster that mediates the biosynthesis of macrophorins, isoprenoid epoxycyclohexenones containing cyclized drimane moieties. The first step of the pathway is the synthesis of 6-methylsalicylic acid (6-MSA) by the polyketide synthase macA. 6-MSA is then converted to m-cresol by the decarboxylase macB. The cytochrome P450 monooxygenase macC then catalyzes the oxidation of m-cresol to toluquinol. Epoxidation of toluquinol is then performed by the short chain dehydrogenase macD, with the help of macE, and a further prenylation by macG leads to 7-deacetoxyyanuthone A. The next step is the hydroxylation of C-22 of 7-deacetoxyyanuthone A by the cytochrome P450 monooxygenase macH to yield 22-deacetylyanuthone A. O-Mevalon transferase macI then attaches mevalon to the hydroxyl group of 22-deacetylyanuthone A to produce yanuthone E. The terpene cyclase macJ catalyzes the cyclization of 22-deacetylyanuthone A to macrophorin A. MacJ is also able to catalyze cyclization of yanuthone E and 7-deacetoxyyanuthone A to their corresponding macrophorins. The macJ products can be further modified by macH and macJ, as well as by the FAD-dependent monooxygenase macF, to produce additional macrophorins, including 4'-oxomacrophorin A, 4'-oxomacrophorin D and 4'-oxomacrophorin E. This is Oxidoreductase macE from Penicillium terrestre.